A 426-amino-acid chain; its full sequence is Serine--tRNA ligase (426 aa).

229–231 is a binding site for L-serine; sequence TAE. An ATP-binding site is contributed by 260–262; it reads RSE. Glu283 serves as a coordination point for L-serine. Residue 347–350 participates in ATP binding; sequence EIAS. An L-serine-binding site is contributed by Ser383.

This sequence belongs to the class-II aminoacyl-tRNA synthetase family. Type-1 seryl-tRNA synthetase subfamily. As to quaternary structure, homodimer. The tRNA molecule binds across the dimer.

The protein resides in the cytoplasm. It carries out the reaction tRNA(Ser) + L-serine + ATP = L-seryl-tRNA(Ser) + AMP + diphosphate + H(+). It catalyses the reaction tRNA(Sec) + L-serine + ATP = L-seryl-tRNA(Sec) + AMP + diphosphate + H(+). The protein operates within aminoacyl-tRNA biosynthesis; selenocysteinyl-tRNA(Sec) biosynthesis; L-seryl-tRNA(Sec) from L-serine and tRNA(Sec): step 1/1. Functionally, catalyzes the attachment of serine to tRNA(Ser). Is also able to aminoacylate tRNA(Sec) with serine, to form the misacylated tRNA L-seryl-tRNA(Sec), which will be further converted into selenocysteinyl-tRNA(Sec). The chain is Serine--tRNA ligase from Rickettsia bellii (strain RML369-C).